Reading from the N-terminus, the 643-residue chain is Alpha-dioxygenase 1 (643 aa).

Catalysis depends on H167, which acts as the Proton acceptor. D168 serves as a coordination point for Ca(2+). H172 lines the heme b pocket. The Ca(2+) site is built by T220, W222, D224, and S226. Residues H392, R489, and R493 each coordinate heme b.

This sequence belongs to the peroxidase family. It depends on heme b as a cofactor. Ca(2+) serves as cofactor.

Its function is as follows. Alpha-dioxygenase that catalyzes the primary oxygenation step of a variety of 14-20 carbon fatty acids, containing up to three unsaturated bonds, into their corresponding 2R-hydroperoxides. Involved in the production of oxylipins that function in cell signaling, wound healing, and protection from infection. The lipid-derived signaling pathway is involved in the initial response of hot pepper plants to pathogen infection. This is Alpha-dioxygenase 1 from Capsicum annuum (Capsicum pepper).